A 79-amino-acid chain; its full sequence is Potassium channel toxin Hge-beta-KTx (79 aa).

A signal peptide spans 1 to 21 (MAKSFFAAFLIIMLISSLVDG). Positions 48–79 (EYMCPVVSSFCKQHCARLGKSGQCDLLECICS) constitute a BetaSPN-type CS-alpha/beta domain. 3 cysteine pairs are disulfide-bonded: Cys-51–Cys-71, Cys-58–Cys-76, and Cys-62–Cys-78.

In terms of tissue distribution, expressed by the venom gland.

Its subcellular location is the secreted. Functionally, the full peptide presents antibacterial and cytotoxic activities. The synthetic C-terminus (AA 33-76) inhibits voltage-gated potassium channels Kv1.1/KCNA1, Kv1.2/KCNA2, and Kv1.3/KCNA3. In Hoffmannihadrurus gertschi (Scorpion), this protein is Potassium channel toxin Hge-beta-KTx.